A 943-amino-acid polypeptide reads, in one-letter code: Translation initiation factor IF-2 (943 aa).

Disordered regions lie at residues 96-229 (FIKR…ERRR) and 243-352 (AAPK…QRQQ). A compositionally biased stretch (low complexity) spans 104 to 116 (DAPSDAAESAPSA). Basic and acidic residues-rich tracts occupy residues 120–163 (ELVR…EERA) and 171–229 (AEKK…ERRR). Residues 278–293 (ATGSGTGARAAAPSAP) are compositionally biased toward low complexity. Over residues 313–323 (TTKKKEIKTRG) the composition is skewed to basic and acidic residues. The 170-residue stretch at 443-612 (SRAPVVTVMG…LLQAEVLELK (170 aa)) folds into the tr-type G domain. Residues 452–459 (GHVDHGKT) are G1. A GTP-binding site is contributed by 452 to 459 (GHVDHGKT). The G2 stretch occupies residues 477-481 (GITQH). The interval 498–501 (DTPG) is G3. GTP is bound by residues 498 to 502 (DTPGH) and 552 to 555 (TKAD). The interval 552 to 555 (TKAD) is G4. The tract at residues 588–590 (SSK) is G5.

It belongs to the TRAFAC class translation factor GTPase superfamily. Classic translation factor GTPase family. IF-2 subfamily.

It localises to the cytoplasm. In terms of biological role, one of the essential components for the initiation of protein synthesis. Protects formylmethionyl-tRNA from spontaneous hydrolysis and promotes its binding to the 30S ribosomal subunits. Also involved in the hydrolysis of GTP during the formation of the 70S ribosomal complex. The polypeptide is Translation initiation factor IF-2 (Acidovorax sp. (strain JS42)).